We begin with the raw amino-acid sequence, 436 residues long: Phosphoribosylamine--glycine ligase (436 aa).

The ATP-grasp domain maps to 106-318 (RKLFEDYRIP…MLEICEGIVD (213 aa)). 133 to 196 (MEDFDSEAVV…EERVVGEEFT (64 aa)) provides a ligand contact to ATP. The Mg(2+) site is built by Gln-276, Glu-288, and Asn-290. Mn(2+)-binding residues include Gln-276, Glu-288, and Asn-290.

Belongs to the GARS family. Mg(2+) is required as a cofactor. It depends on Mn(2+) as a cofactor.

The catalysed reaction is 5-phospho-beta-D-ribosylamine + glycine + ATP = N(1)-(5-phospho-beta-D-ribosyl)glycinamide + ADP + phosphate + H(+). The protein operates within purine metabolism; IMP biosynthesis via de novo pathway; N(1)-(5-phospho-D-ribosyl)glycinamide from 5-phospho-alpha-D-ribose 1-diphosphate: step 2/2. The protein is Phosphoribosylamine--glycine ligase of Methanothermobacter thermautotrophicus (strain ATCC 29096 / DSM 1053 / JCM 10044 / NBRC 100330 / Delta H) (Methanobacterium thermoautotrophicum).